Reading from the N-terminus, the 394-residue chain is MSARTVVLLGSTGSIGTQALDVVAAAPGRFQVVGLAAGGSDLELLARQAVAHDVPVVAVAAGEQDDVAAAIRAAGGRRTEVLTGPGAAADLAGRGADVVLNGITGSVGLAPTLAALEAGSTLALANKESLVAGAALVRAAQQRADQIVPVDSEHSAIAQALRSGARSEVARLVLTASGGPFRGWSREQMAGVTPEQALAHPTWAMGPVVTTNSATLMNKGLELIEAHVLFDVPVADITVVVHPQSVVHSMVEFVDGSTIAQASPPDMRLPIALGLAWPDRVPGAASPCRWDAATSWTFEPVDDAAFPALDLAREAVKASPLHPAVLNAANEEAVAAFLDGRLPFLDVVGTVARVLGEYPDPPDGALSLEGVQAAEAWARARSRALVADGPSRER.

Thr12, Gly13, Ser14, Ile15, Gly38, and Asn126 together coordinate NADPH. Lys127 contributes to the 1-deoxy-D-xylulose 5-phosphate binding site. Glu128 provides a ligand contact to NADPH. Position 151 (Asp151) interacts with Mn(2+). The 1-deoxy-D-xylulose 5-phosphate site is built by Ser152, Glu153, Ser177, and His200. Glu153 contacts Mn(2+). Gly206 is an NADPH binding site. Ser213, Asn218, Lys219, and Glu222 together coordinate 1-deoxy-D-xylulose 5-phosphate. Position 222 (Glu222) interacts with Mn(2+).

This sequence belongs to the DXR family. Mg(2+) serves as cofactor. Requires Mn(2+) as cofactor.

The enzyme catalyses 2-C-methyl-D-erythritol 4-phosphate + NADP(+) = 1-deoxy-D-xylulose 5-phosphate + NADPH + H(+). Its pathway is isoprenoid biosynthesis; isopentenyl diphosphate biosynthesis via DXP pathway; isopentenyl diphosphate from 1-deoxy-D-xylulose 5-phosphate: step 1/6. Functionally, catalyzes the NADPH-dependent rearrangement and reduction of 1-deoxy-D-xylulose-5-phosphate (DXP) to 2-C-methyl-D-erythritol 4-phosphate (MEP). The chain is 1-deoxy-D-xylulose 5-phosphate reductoisomerase from Beutenbergia cavernae (strain ATCC BAA-8 / DSM 12333 / CCUG 43141 / JCM 11478 / NBRC 16432 / NCIMB 13614 / HKI 0122).